A 359-amino-acid chain; its full sequence is Nicotinate-nucleotide--dimethylbenzimidazole phosphoribosyltransferase (359 aa).

Catalysis depends on E318, which acts as the Proton acceptor.

This sequence belongs to the CobT family. As to quaternary structure, homodimer.

The catalysed reaction is 5,6-dimethylbenzimidazole + nicotinate beta-D-ribonucleotide = alpha-ribazole 5'-phosphate + nicotinate + H(+). Its pathway is nucleoside biosynthesis; alpha-ribazole biosynthesis; alpha-ribazole from 5,6-dimethylbenzimidazole: step 1/2. In terms of biological role, catalyzes the synthesis of alpha-ribazole-5'-phosphate from nicotinate mononucleotide (NAMN) and 5,6-dimethylbenzimidazole (DMB). This chain is Nicotinate-nucleotide--dimethylbenzimidazole phosphoribosyltransferase, found in Escherichia coli O157:H7.